The chain runs to 173 residues: Adenine phosphoribosyltransferase (173 aa).

This sequence belongs to the purine/pyrimidine phosphoribosyltransferase family. In terms of assembly, homodimer.

Its subcellular location is the cytoplasm. It catalyses the reaction AMP + diphosphate = 5-phospho-alpha-D-ribose 1-diphosphate + adenine. The protein operates within purine metabolism; AMP biosynthesis via salvage pathway; AMP from adenine: step 1/1. Catalyzes a salvage reaction resulting in the formation of AMP, that is energically less costly than de novo synthesis. This is Adenine phosphoribosyltransferase from Desulfitobacterium hafniense (strain Y51).